We begin with the raw amino-acid sequence, 345 residues long: Protein-glutamate methylesterase/protein-glutamine glutaminase 2 (345 aa).

Residues 7–124 (KVLVVDDSPV…TADMLGYRSL (118 aa)) form the Response regulatory domain. Position 58 is a 4-aspartylphosphate (Asp-58). The CheB-type methylesterase domain maps to 154–345 (STSQYQLIAI…LPQFLCDLLS (192 aa)). Active-site residues include Ser-166, His-192, and Asp-289.

It belongs to the CheB family. Phosphorylated by CheA. Phosphorylation of the N-terminal regulatory domain activates the methylesterase activity.

Its subcellular location is the cytoplasm. The catalysed reaction is [protein]-L-glutamate 5-O-methyl ester + H2O = L-glutamyl-[protein] + methanol + H(+). The enzyme catalyses L-glutaminyl-[protein] + H2O = L-glutamyl-[protein] + NH4(+). Its function is as follows. Involved in chemotaxis. Part of a chemotaxis signal transduction system that modulates chemotaxis in response to various stimuli. Catalyzes the demethylation of specific methylglutamate residues introduced into the chemoreceptors (methyl-accepting chemotaxis proteins or MCP) by CheR. Also mediates the irreversible deamidation of specific glutamine residues to glutamic acid. The chain is Protein-glutamate methylesterase/protein-glutamine glutaminase 2 from Vibrio vulnificus (strain YJ016).